The chain runs to 258 residues: MLDIDVSNLSIGRQQVLTSLNLSLEAHQFVAIVGENGAGKSTFLNMLAGELPYNGSIYLNGRELNSWDALKLAPIRAVMEQHQAAPEGLSVKELVAMGRYWSQESDADAEQRATQWLSRFDLTPMGERGIETLSGGEQQRAHLARCLCQLDKDLPGEQLLLLDEPTSALDVYHQHAVLHEIKSFSQKGNLVLSVMHDLNLASLYADQVIVLGNNCIQHVDSPESVFREDILERTYRTPVHVSSHPSFLKPMIFTEPRH.

One can recognise an ABC transporter domain in the interval 1 to 238 (MLDIDVSNLS…DILERTYRTP (238 aa)). 34–41 (GENGAGKS) is a binding site for ATP.

It belongs to the ABC transporter superfamily. Heme (hemin) importer (TC 3.A.1.14.5) family. As to quaternary structure, the complex is composed of two ATP-binding proteins (HmuV), two transmembrane proteins (HmuU) and a solute-binding protein (HmuT).

The protein resides in the cell inner membrane. Functionally, part of the ABC transporter complex HmuTUV involved in hemin import. Responsible for energy coupling to the transport system. The chain is Hemin import ATP-binding protein HmuV from Idiomarina loihiensis (strain ATCC BAA-735 / DSM 15497 / L2-TR).